Here is a 184-residue protein sequence, read N- to C-terminus: Elongation factor P 1 (184 aa).

It belongs to the elongation factor P family.

It is found in the cytoplasm. The protein operates within protein biosynthesis; polypeptide chain elongation. In terms of biological role, involved in peptide bond synthesis. Stimulates efficient translation and peptide-bond synthesis on native or reconstituted 70S ribosomes in vitro. Probably functions indirectly by altering the affinity of the ribosome for aminoacyl-tRNA, thus increasing their reactivity as acceptors for peptidyl transferase. The protein is Elongation factor P 1 (efp1) of Protochlamydia amoebophila (strain UWE25).